A 294-amino-acid chain; its full sequence is Aquaporin-B (294 aa).

The disordered stretch occupies residues 1–31 (MSLKRSDDYQDLEEGIAMEDGGNIKDEEEKP). At 1 to 42 (MSLKRSDDYQDLEEGIAMEDGGNIKDEEEKPLDPIEEQNKKR) the chain is on the cytoplasmic side. Positions 22–31 (GNIKDEEEKP) are enriched in basic and acidic residues. The helical transmembrane segment at 43-63 (WVLIRAVLGELLCTFLFVYVL) threads the bilayer. The Extracellular portion of the chain corresponds to 64–79 (CATSANFIRLGSPPNP). O-linked (GalNAc...) serine glycosylation occurs at Ser75. The helical transmembrane segment at 80 to 100 (VVGGLSTGFAAVALIYSFADV) threads the bilayer. Topologically, residues 101 to 123 (SGAHFNPAVTFATCVTRKTSITK) are cytoplasmic. The NPA 1 motif lies at 106 to 108 (NPA). Residues 124–144 (GLMYVGAQLVGSVLASLILLA) traverse the membrane as a helical segment. Over 145–172 (TFPGNFPGDKNAASAVAIAPSTDANIGN) the chain is Extracellular. Residues 173-193 (AFLTELVLTFILVYVIFAVAF) traverse the membrane as a helical segment. Residues 194-224 (DTVDNSVKTKVVGKSSSNNLTIYTTSGQTKA) lie on the Cytoplasmic side of the membrane. The required for water permeability stretch occupies residues 208–219 (SSSNNLTIYTTS). A helical membrane pass occupies residues 225 to 245 (GFAPIAIGFTLGFLCFLGGSV). Topologically, residues 246–268 (SGGAFNPARVFGTALVGNNWTRH) are extracellular. The NPA 2 motif lies at 251 to 253 (NPA). The helical transmembrane segment at 269–289 (WMYWIADFLGAGLAGFAQKFF) threads the bilayer. At 290–294 (SSTHK) the chain is on the cytoplasmic side.

The protein belongs to the MIP/aquaporin (TC 1.A.8) family. Post-translationally, glycosylated and non-glycosylated forms exist throughout all developmental stages.

It localises to the cell membrane. The protein resides in the cytoplasmic vesicle. Its function is as follows. Putatively gated water-specific channel, requiring a cysteine residue within the channel. Impermeable to water, glycerol and urea when expressed in Xenopus oocytes. Not regulated by pH; channels remain impermeable to water at pH 7.4 and 5.2. In Dictyostelium discoideum (Social amoeba), this protein is Aquaporin-B.